A 114-amino-acid polypeptide reads, in one-letter code: Beta-microseminoprotein (114 aa).

An N-terminal signal peptide occupies residues 1 to 20; sequence MNVLLGGFVIFATFVTLCNA. Disulfide bonds link cysteine 22–cysteine 70, cysteine 38–cysteine 62, cysteine 57–cysteine 93, cysteine 60–cysteine 69, and cysteine 84–cysteine 107.

Belongs to the beta-microseminoprotein family. As to quaternary structure, homodimer; Interacts with PI16.

The protein resides in the secreted. In Macaca mulatta (Rhesus macaque), this protein is Beta-microseminoprotein (MSMB).